Consider the following 306-residue polypeptide: MKVIKVGTRKSKLAMTQTQQLVDQLKALHPERDFVLVPYTTKGDRLTHVSLQEIGGKGVFVKEIERALLAGEINMAVHSLKDMPAKLAEGCALGAISQREDVRDCLIFRQAGQTLADLPKGSLIGTSSIRRQVQLQAQRPDLAFKPLRGNIDTRIKKLEEGEYDAIVLAMAGLKRLGWLDQSRLHIQPLETSLCLPAISQGALAVECREEDEELLSLLAAVQDEKTAAEVAVERAVLAQMNADCTFPIAAFAQKNGQGYQLEAMLAKEDGQCIFVSLQGQDGQQLAEQAVRQLADKGAVGMPWLKK.

Cysteine 244 is modified (S-(dipyrrolylmethanemethyl)cysteine).

The protein belongs to the HMBS family. As to quaternary structure, monomer. The cofactor is dipyrromethane.

The catalysed reaction is 4 porphobilinogen + H2O = hydroxymethylbilane + 4 NH4(+). Its pathway is porphyrin-containing compound metabolism; protoporphyrin-IX biosynthesis; coproporphyrinogen-III from 5-aminolevulinate: step 2/4. Functionally, tetrapolymerization of the monopyrrole PBG into the hydroxymethylbilane pre-uroporphyrinogen in several discrete steps. The chain is Porphobilinogen deaminase from Streptococcus sanguinis (strain SK36).